The sequence spans 234 residues: MAKLTKRMRVIRDKVDATKQYDITEAIALLKELATAKFVESVDVAVNLGIDARKSDQNVRGATVLPHGTGRSVRVAVFTQGANAEAAKAAGAELVGMEDLAEQIKKGEMNFDVVIASPDAMRVVGQLGQISGPRGLMPNPKVGTVTPNVAEAVKNAKAGQVRYRNDKNGIIHTTIGKVDFDADKLKENLEALLVALKKAKPSQAKGMYIKKVSLSTTMGAGVAIDQSGLSAAAN.

Belongs to the universal ribosomal protein uL1 family. As to quaternary structure, part of the 50S ribosomal subunit.

In terms of biological role, binds directly to 23S rRNA. The L1 stalk is quite mobile in the ribosome, and is involved in E site tRNA release. Its function is as follows. Protein L1 is also a translational repressor protein, it controls the translation of the L11 operon by binding to its mRNA. The sequence is that of Large ribosomal subunit protein uL1 from Serratia marcescens.